The primary structure comprises 349 residues: Phenylalanine--tRNA ligase alpha subunit (349 aa).

Glu-259 contacts Mg(2+).

Belongs to the class-II aminoacyl-tRNA synthetase family. Phe-tRNA synthetase alpha subunit type 1 subfamily. In terms of assembly, tetramer of two alpha and two beta subunits. It depends on Mg(2+) as a cofactor.

Its subcellular location is the cytoplasm. The catalysed reaction is tRNA(Phe) + L-phenylalanine + ATP = L-phenylalanyl-tRNA(Phe) + AMP + diphosphate + H(+). In Lactobacillus delbrueckii subsp. bulgaricus (strain ATCC 11842 / DSM 20081 / BCRC 10696 / JCM 1002 / NBRC 13953 / NCIMB 11778 / NCTC 12712 / WDCM 00102 / Lb 14), this protein is Phenylalanine--tRNA ligase alpha subunit.